The sequence spans 536 residues: Mannuronan C5-epimerase (536 aa).

Positions 1–36 are cleaved as a signal peptide; it reads MNSHASNGRSRNWPHALLESALLTSALLMASSVALA. PbH1 repeat units follow at residues 298–320, 322–345, 347–369, 371–393, and 394–416; these read TRDFVVKGNTYRDNIVYGIDPHD, SHGLIIAENDVYGTKKKHGIIISR, VDNSFIFRNKSHNNKLSGVVLDR, SVGNIVAYNEIYQNHTDGITLYE, and SGNNLLWGNRVIANRRHGIRVRN. The Proton acceptor role is filled by H319.

This sequence belongs to the D-mannuronate C5-epimerase family.

It localises to the periplasm. It catalyses the reaction [(1-&gt;4)-beta-D-mannuronosyl](n) = [alginate](n). The protein operates within glycan biosynthesis; alginate biosynthesis. Functionally, catalyzes the epimerization of beta-D-mannuronate to alpha-L-guluronate during the synthesis of the linear polysaccharide alginate. In addition, is part of a periplasmic protein complex that protects alginate from degradation by AlgL by channeling the newly formed alginate polymer through a scaffold that transfers the alginate polymer through the periplasmic space to the outer membrane secretin AlgE. The sequence is that of Mannuronan C5-epimerase (algG) from Pseudomonas syringae pv. tomato (strain ATCC BAA-871 / DC3000).